We begin with the raw amino-acid sequence, 255 residues long: tRNA pseudouridine synthase A (255 aa).

Residue D52 is the Nucleophile of the active site. Y111 provides a ligand contact to substrate.

This sequence belongs to the tRNA pseudouridine synthase TruA family. Homodimer.

The enzyme catalyses uridine(38/39/40) in tRNA = pseudouridine(38/39/40) in tRNA. Functionally, formation of pseudouridine at positions 38, 39 and 40 in the anticodon stem and loop of transfer RNAs. This is tRNA pseudouridine synthase A from Cereibacter sphaeroides (strain ATCC 17029 / ATH 2.4.9) (Rhodobacter sphaeroides).